An 860-amino-acid chain; its full sequence is Leucine--tRNA ligase (860 aa).

The short motif at 42 to 52 is the 'HIGH' region element; that stretch reads PYPSGRLHMGH. The 'KMSKS' region signature appears at 619 to 623; it reads KMSKS. Lysine 622 is an ATP binding site.

Belongs to the class-I aminoacyl-tRNA synthetase family.

The protein localises to the cytoplasm. It carries out the reaction tRNA(Leu) + L-leucine + ATP = L-leucyl-tRNA(Leu) + AMP + diphosphate. In Escherichia coli O9:H4 (strain HS), this protein is Leucine--tRNA ligase.